The following is a 405-amino-acid chain: Dematin (405 aa).

Disordered regions lie at residues 1 to 30 (MERL…PSSI), 79 to 158 (PRSR…GSPQ), 173 to 192 (FPAA…TDYW), and 203 to 332 (TEWR…DRGN). Residues 11–29 (SPGSVSPSRDSSVPGSPSS) are compositionally biased toward low complexity. Serine 16, serine 18, serine 26, serine 92, serine 96, serine 105, serine 110, serine 113, and serine 156 each carry phosphoserine. A compositionally biased stretch (polar residues) spans 108-123 (IISQASAPRTTGTPRT). Over residues 216–227 (EEEEEEEDDDSG) the composition is skewed to acidic residues. The interaction with RASGRF2 stretch occupies residues 224 to 308 (DDSGEEMKAL…SRLQSTEFSP (85 aa)). A Phosphoserine modification is found at serine 226. 2 stretches are compositionally biased toward basic and acidic residues: residues 228–242 (EEMK…EELS) and 252–261 (ILKEEMEKSL). A phosphoserine mark is found at serine 269, serine 279, serine 289, serine 303, serine 315, serine 333, serine 372, and serine 383. The segment covering 276-322 (FHTSLHQGTSKSSSLPAYGRTTLSRLQSTEFSPSGSETGSPGLQNGE) has biased composition (polar residues). Positions 337-405 (VLEQKIYPYE…NELKKKASLF (69 aa)) constitute an HP domain. The residue at position 403 (serine 403) is a Phosphoserine; by PKA.

The protein belongs to the villin/gelsolin family. Monomeric (isoform 2); under reducing conditions. Self-associates. Exists under oxidizing condition as a trimer of two isoforms 2 and isoform 1 linked by disulfide bonds. Found in a complex with DMTN, F-actin and spectrin. Found in a complex with ADD2, DMTN and SLC2A1. Interacts with F-actin, ITPKB, RASGRF2 and spectrin. Isoform 2 interacts with SLC2A1 (via C-terminus cytoplasmic region). Isoform 1 and isoform 2 interact (phosphorylated form) with plasmodium berghei 14-3-3 protein; the interaction occurs in a PKA-dependent manner. Post-translationally, phosphorylated. Phosphorylation at Ser-403 by PKA causes the C-terminal headpiece domain to associate with the N-terminal core domain, and leads to the inhibition of its actin bundling activity. In terms of processing, the N-terminus is blocked. In terms of tissue distribution, expressed in platelets (at protein level). Expressed in heart, brain, lung, skeletal muscle, and kidney.

Its subcellular location is the cytoplasm. The protein resides in the cytosol. It is found in the perinuclear region. It localises to the cytoskeleton. The protein localises to the cell membrane. Its subcellular location is the membrane. The protein resides in the endomembrane system. It is found in the cell projection. Functionally, membrane-cytoskeleton-associated protein with F-actin-binding activity that induces F-actin bundles formation and stabilization. Its F-actin-bundling activity is reversibly regulated upon its phosphorylation by the cAMP-dependent protein kinase A (PKA). Binds to the erythrocyte membrane glucose transporter-1 SLC2A1/GLUT1, and hence stabilizes and attaches the spectrin-actin network to the erythrocytic plasma membrane. Plays a role in maintaining the functional integrity of PKA-activated erythrocyte shape and the membrane mechanical properties. Also plays a role as a modulator of actin dynamics in fibroblasts; acts as a negative regulator of the RhoA activation pathway. In platelets, functions as a regulator of internal calcium mobilization across the dense tubular system that affects platelet granule secretion pathways and aggregation. Also required for the formation of a diverse set of cell protrusions, such as filopodia and lamellipodia, necessary for platelet cell spreading, motility and migration. Acts as a tumor suppressor and inhibits malignant cell transformation. This chain is Dematin (DMTN), found in Homo sapiens (Human).